The sequence spans 138 residues: Ribosomal RNA large subunit methyltransferase H (138 aa).

S-adenosyl-L-methionine-binding positions include glycine 86 and 105-110 (LSPLTF).

It belongs to the RNA methyltransferase RlmH family. In terms of assembly, homodimer.

It is found in the cytoplasm. It carries out the reaction pseudouridine(1915) in 23S rRNA + S-adenosyl-L-methionine = N(3)-methylpseudouridine(1915) in 23S rRNA + S-adenosyl-L-homocysteine + H(+). Specifically methylates the pseudouridine at position 1915 (m3Psi1915) in 23S rRNA. This Prochlorococcus marinus (strain MIT 9215) protein is Ribosomal RNA large subunit methyltransferase H.